The chain runs to 236 residues: OPEP-2 protein (236 aa).

In Orgyia pseudotsugata (Douglas-fir tussock moth), this protein is OPEP-2 protein (OPEP-2).